A 307-amino-acid polypeptide reads, in one-letter code: Replication termination factor 2 (307 aa).

The tract at residues 193–296 (AKLEKKTKKP…SSAKRSKEES (104 aa)) is disordered. A compositionally biased stretch (basic and acidic residues) spans 227–241 (GKPEEADPDPREKKS). S288 carries the post-translational modification Phosphoserine.

It belongs to the rtf2 family. Interacts with DDI2; probably also interacts with DDI1. In terms of processing, undergoes proteasomal degradation, via DDI1 and DDI2. Removal from stalled replisomes and degradation are required for genome stability.

The protein localises to the chromosome. Replication termination factor which is a component of the elongating replisome. Required for ATR pathway signaling upon DNA damage and has a positive activity during DNA replication. Might function to facilitate fork pausing at replication fork barriers like the rDNA. May be globally required to stimulate ATR signaling after the fork stalls or encounters a lesion. Interacts with nascent DNA. The sequence is that of Replication termination factor 2 from Mus musculus (Mouse).